The following is a 185-amino-acid chain: Large ribosomal subunit protein uL5 (185 aa).

This sequence belongs to the universal ribosomal protein uL5 family. Part of the 50S ribosomal subunit; part of the 5S rRNA/L5/L18/L25 subcomplex. Contacts the 5S rRNA and the P site tRNA. Forms a bridge to the 30S subunit in the 70S ribosome.

Its function is as follows. This is one of the proteins that bind and probably mediate the attachment of the 5S RNA into the large ribosomal subunit, where it forms part of the central protuberance. In the 70S ribosome it contacts protein S13 of the 30S subunit (bridge B1b), connecting the 2 subunits; this bridge is implicated in subunit movement. Contacts the P site tRNA; the 5S rRNA and some of its associated proteins might help stabilize positioning of ribosome-bound tRNAs. This is Large ribosomal subunit protein uL5 from Protochlamydia amoebophila (strain UWE25).